We begin with the raw amino-acid sequence, 400 residues long: NADH-quinone oxidoreductase subunit D (400 aa).

This sequence belongs to the complex I 49 kDa subunit family. In terms of assembly, NDH-1 is composed of 14 different subunits. Subunits NuoB, C, D, E, F, and G constitute the peripheral sector of the complex.

It localises to the cell inner membrane. The catalysed reaction is a quinone + NADH + 5 H(+)(in) = a quinol + NAD(+) + 4 H(+)(out). Its function is as follows. NDH-1 shuttles electrons from NADH, via FMN and iron-sulfur (Fe-S) centers, to quinones in the respiratory chain. The immediate electron acceptor for the enzyme in this species is believed to be a menaquinone. Couples the redox reaction to proton translocation (for every two electrons transferred, four hydrogen ions are translocated across the cytoplasmic membrane), and thus conserves the redox energy in a proton gradient. This Chlorobium phaeobacteroides (strain DSM 266 / SMG 266 / 2430) protein is NADH-quinone oxidoreductase subunit D.